The sequence spans 816 residues: Neuroligin-4, X-linked (816 aa).

The first 41 residues, 1–41 (MSRPQGLLWLPLLFTPVCVMLNSNVLLWLTALAIKFTLIDS), serve as a signal peptide directing secretion. Topologically, residues 42–676 (QAQYPVVNTN…TKRDYSTELS (635 aa)) are extracellular. A glycan (N-linked (GlcNAc...) asparagine) is linked at Asn102. Cystine bridges form between Cys110-Cys146 and Cys306-Cys317. An interaction with NRXN1 region spans residues 359–364 (QGEFLN). Cys476 and Cys510 are disulfide-bonded. Asn511 carries an N-linked (GlcNAc...) asparagine glycan. Residues 636–659 (TKRPAITPANNPKHSKDPHKTGPE) are disordered. A compositionally biased stretch (basic and acidic residues) spans 649 to 658 (HSKDPHKTGP). Residues 677–697 (VTIAVGASLLFLNILAFAALY) form a helical membrane-spanning segment. Residues 698–816 (YKKDKRRHET…LPHGHSTTRV (119 aa)) lie on the Cytoplasmic side of the membrane. Residue Ser712 is modified to Phosphoserine.

It belongs to the type-B carboxylesterase/lipase family. Homodimer. Interacts with NRXN1 in a calcium-dependent manner. Interaction with neurexins is mediated by heparan sulfate glycan modification on neurexin. Interacts through its C-terminus with DLG4/PSD-95 third PDZ domain. As to expression, expressed at highest levels in heart. Expressed at lower levels in liver, skeletal muscle and pancreas and at very low levels in brain.

Its subcellular location is the cell membrane. It is found in the postsynaptic density membrane. Its function is as follows. Cell surface protein involved in cell-cell-interactions via its interactions with neurexin family members. This Homo sapiens (Human) protein is Neuroligin-4, X-linked (NLGN4X).